A 779-amino-acid chain; its full sequence is Phosphoribosylformylglycinamidine synthase subunit PurL (779 aa).

The active site involves histidine 52. Residues tyrosine 55 and lysine 94 each coordinate ATP. Glutamate 96 lines the Mg(2+) pocket. Substrate contacts are provided by residues 97-100 (SHNH) and arginine 119. Histidine 98 (proton acceptor) is an active-site residue. Aspartate 120 lines the Mg(2+) pocket. A substrate-binding site is contributed by glutamine 243. Aspartate 271 contributes to the Mg(2+) binding site. 315–317 (ESQ) is a substrate binding site. ATP contacts are provided by asparagine 523 and glycine 560. Asparagine 561 is a binding site for Mg(2+). Substrate is bound at residue serine 563.

The protein belongs to the FGAMS family. In terms of assembly, monomer. Part of the FGAM synthase complex composed of 1 PurL, 1 PurQ and 2 PurS subunits.

Its subcellular location is the cytoplasm. It catalyses the reaction N(2)-formyl-N(1)-(5-phospho-beta-D-ribosyl)glycinamide + L-glutamine + ATP + H2O = 2-formamido-N(1)-(5-O-phospho-beta-D-ribosyl)acetamidine + L-glutamate + ADP + phosphate + H(+). It participates in purine metabolism; IMP biosynthesis via de novo pathway; 5-amino-1-(5-phospho-D-ribosyl)imidazole from N(2)-formyl-N(1)-(5-phospho-D-ribosyl)glycinamide: step 1/2. In terms of biological role, part of the phosphoribosylformylglycinamidine synthase complex involved in the purines biosynthetic pathway. Catalyzes the ATP-dependent conversion of formylglycinamide ribonucleotide (FGAR) and glutamine to yield formylglycinamidine ribonucleotide (FGAM) and glutamate. The FGAM synthase complex is composed of three subunits. PurQ produces an ammonia molecule by converting glutamine to glutamate. PurL transfers the ammonia molecule to FGAR to form FGAM in an ATP-dependent manner. PurS interacts with PurQ and PurL and is thought to assist in the transfer of the ammonia molecule from PurQ to PurL. The sequence is that of Phosphoribosylformylglycinamidine synthase subunit PurL from Prochlorococcus marinus (strain MIT 9515).